Here is a 271-residue protein sequence, read N- to C-terminus: Tryptophan synthase alpha chain (271 aa).

Catalysis depends on proton acceptor residues Glu-49 and Asp-60.

Belongs to the TrpA family. In terms of assembly, tetramer of two alpha and two beta chains.

The catalysed reaction is (1S,2R)-1-C-(indol-3-yl)glycerol 3-phosphate + L-serine = D-glyceraldehyde 3-phosphate + L-tryptophan + H2O. It participates in amino-acid biosynthesis; L-tryptophan biosynthesis; L-tryptophan from chorismate: step 5/5. Functionally, the alpha subunit is responsible for the aldol cleavage of indoleglycerol phosphate to indole and glyceraldehyde 3-phosphate. The sequence is that of Tryptophan synthase alpha chain from Yersinia pestis bv. Antiqua (strain Angola).